The sequence spans 468 residues: ATP synthase subunit beta (468 aa).

148-155 (GGAGVGKT) contacts ATP.

The protein belongs to the ATPase alpha/beta chains family. As to quaternary structure, F-type ATPases have 2 components, CF(1) - the catalytic core - and CF(0) - the membrane proton channel. CF(1) has five subunits: alpha(3), beta(3), gamma(1), delta(1), epsilon(1). CF(0) has three main subunits: a(1), b(2) and c(9-12). The alpha and beta chains form an alternating ring which encloses part of the gamma chain. CF(1) is attached to CF(0) by a central stalk formed by the gamma and epsilon chains, while a peripheral stalk is formed by the delta and b chains.

It localises to the cell membrane. The enzyme catalyses ATP + H2O + 4 H(+)(in) = ADP + phosphate + 5 H(+)(out). In terms of biological role, produces ATP from ADP in the presence of a proton gradient across the membrane. The catalytic sites are hosted primarily by the beta subunits. This is ATP synthase subunit beta from Stenotrophomonas maltophilia (strain K279a).